The primary structure comprises 376 residues: Chaperone protein DnaJ (376 aa).

The J domain occupies 5–70 (DYYEVLGVGR…DKKAAYDQFG (66 aa)). The CR-type zinc-finger motif lies at 132–210 (GLTKELRIPT…CHGEGRVEKS (79 aa)). Residues Cys-145, Cys-148, Cys-162, Cys-165, Cys-184, Cys-187, Cys-198, and Cys-201 each coordinate Zn(2+). 4 CXXCXGXG motif repeats span residues 145-152 (CDSCDGSG), 162-169 (CGTCHGQG), 184-191 (CPTCHGRG), and 198-205 (CNKCHGEG).

The protein belongs to the DnaJ family. In terms of assembly, homodimer. The cofactor is Zn(2+).

It is found in the cytoplasm. Functionally, participates actively in the response to hyperosmotic and heat shock by preventing the aggregation of stress-denatured proteins and by disaggregating proteins, also in an autonomous, DnaK-independent fashion. Unfolded proteins bind initially to DnaJ; upon interaction with the DnaJ-bound protein, DnaK hydrolyzes its bound ATP, resulting in the formation of a stable complex. GrpE releases ADP from DnaK; ATP binding to DnaK triggers the release of the substrate protein, thus completing the reaction cycle. Several rounds of ATP-dependent interactions between DnaJ, DnaK and GrpE are required for fully efficient folding. Also involved, together with DnaK and GrpE, in the DNA replication of plasmids through activation of initiation proteins. The polypeptide is Chaperone protein DnaJ (Shewanella pealeana (strain ATCC 700345 / ANG-SQ1)).